We begin with the raw amino-acid sequence, 239 residues long: Ribosomal RNA small subunit methyltransferase G (239 aa).

Residues Gly79, Phe84, Ala130 to Glu131, and Arg149 each bind S-adenosyl-L-methionine.

Belongs to the methyltransferase superfamily. RNA methyltransferase RsmG family.

It is found in the cytoplasm. Functionally, specifically methylates the N7 position of a guanine in 16S rRNA. In Lactobacillus delbrueckii subsp. bulgaricus (strain ATCC 11842 / DSM 20081 / BCRC 10696 / JCM 1002 / NBRC 13953 / NCIMB 11778 / NCTC 12712 / WDCM 00102 / Lb 14), this protein is Ribosomal RNA small subunit methyltransferase G.